The primary structure comprises 182 residues: Ribosome maturation factor RimM (182 aa).

The 80-residue stretch at Glu103–Phe182 folds into the PRC barrel domain.

The protein belongs to the RimM family. Binds ribosomal protein uS19.

It localises to the cytoplasm. Functionally, an accessory protein needed during the final step in the assembly of 30S ribosomal subunit, possibly for assembly of the head region. Essential for efficient processing of 16S rRNA. May be needed both before and after RbfA during the maturation of 16S rRNA. It has affinity for free ribosomal 30S subunits but not for 70S ribosomes. The sequence is that of Ribosome maturation factor RimM from Yersinia enterocolitica serotype O:8 / biotype 1B (strain NCTC 13174 / 8081).